The chain runs to 302 residues: Ornithine carbamoyltransferase (302 aa).

Residues 52–55 (STRT), Gln-79, Arg-103, and 130–133 (HPCQ) contribute to the carbamoyl phosphate site. Residues Asn-161, Asp-221, and 225 to 226 (SM) contribute to the L-ornithine site. Carbamoyl phosphate-binding positions include 261–262 (CL) and Arg-289.

It belongs to the aspartate/ornithine carbamoyltransferase superfamily. OTCase family.

The protein localises to the cytoplasm. The catalysed reaction is carbamoyl phosphate + L-ornithine = L-citrulline + phosphate + H(+). The protein operates within amino-acid biosynthesis; L-arginine biosynthesis; L-arginine from L-ornithine and carbamoyl phosphate: step 1/3. Its function is as follows. Reversibly catalyzes the transfer of the carbamoyl group from carbamoyl phosphate (CP) to the N(epsilon) atom of ornithine (ORN) to produce L-citrulline. In Syntrophotalea carbinolica (strain DSM 2380 / NBRC 103641 / GraBd1) (Pelobacter carbinolicus), this protein is Ornithine carbamoyltransferase.